The sequence spans 472 residues: Aspartyl/glutamyl-tRNA(Asn/Gln) amidotransferase subunit B (472 aa).

This sequence belongs to the GatB/GatE family. GatB subfamily. As to quaternary structure, heterotrimer of A, B and C subunits.

The catalysed reaction is L-glutamyl-tRNA(Gln) + L-glutamine + ATP + H2O = L-glutaminyl-tRNA(Gln) + L-glutamate + ADP + phosphate + H(+). It carries out the reaction L-aspartyl-tRNA(Asn) + L-glutamine + ATP + H2O = L-asparaginyl-tRNA(Asn) + L-glutamate + ADP + phosphate + 2 H(+). Allows the formation of correctly charged Asn-tRNA(Asn) or Gln-tRNA(Gln) through the transamidation of misacylated Asp-tRNA(Asn) or Glu-tRNA(Gln) in organisms which lack either or both of asparaginyl-tRNA or glutaminyl-tRNA synthetases. The reaction takes place in the presence of glutamine and ATP through an activated phospho-Asp-tRNA(Asn) or phospho-Glu-tRNA(Gln). This chain is Aspartyl/glutamyl-tRNA(Asn/Gln) amidotransferase subunit B, found in Campylobacter jejuni subsp. doylei (strain ATCC BAA-1458 / RM4099 / 269.97).